The primary structure comprises 62 residues: MHFSGVAFILISMVLIGSIFETTVEAGEGPKSDCKPDLCEAACKDLGKPMDFCKDGTCKCKD.

The N-terminal stretch at 1 to 26 (MHFSGVAFILISMVLIGSIFETTVEA) is a signal peptide. Cystine bridges form between Cys-34-Cys-53, Cys-39-Cys-58, and Cys-43-Cys-60.

The protein belongs to the short scorpion toxin superfamily. Potassium channel inhibitor family. Alpha-KTx 18 subfamily. In terms of tissue distribution, expressed by the venom gland.

It localises to the secreted. In terms of biological role, probable voltage-gated potassium channel inhibitor. The polypeptide is Potassium channel toxin alpha-KTx 18.3 (Tityus discrepans (Venezuelan scorpion)).